We begin with the raw amino-acid sequence, 507 residues long: Maturase K (507 aa).

It belongs to the intron maturase 2 family. MatK subfamily.

The protein resides in the plastid. Its subcellular location is the chloroplast. Functionally, usually encoded in the trnK tRNA gene intron. Probably assists in splicing its own and other chloroplast group II introns. This Lens culinaris (Lentil) protein is Maturase K.